The chain runs to 93 residues: Small ribosomal subunit protein uS19 (93 aa).

The tract at residues 73-93 (EFSPTRTFRGHVKDDRKSKRR) is disordered. The segment covering 83-93 (HVKDDRKSKRR) has biased composition (basic and acidic residues).

Belongs to the universal ribosomal protein uS19 family.

Its function is as follows. Protein S19 forms a complex with S13 that binds strongly to the 16S ribosomal RNA. The protein is Small ribosomal subunit protein uS19 of Streptomyces coelicolor (strain ATCC BAA-471 / A3(2) / M145).